Here is a 459-residue protein sequence, read N- to C-terminus: Cysteine--tRNA ligase (459 aa).

Cysteine 28 is a Zn(2+) binding site. The 'HIGH' region signature appears at 30–40 (VTVYDLCHIGH). Cysteine 209, histidine 234, and glutamate 238 together coordinate Zn(2+). A 'KMSKS' region motif is present at residues 266 to 270 (KMSKS). An ATP-binding site is contributed by lysine 269.

This sequence belongs to the class-I aminoacyl-tRNA synthetase family. In terms of assembly, monomer. Requires Zn(2+) as cofactor.

The protein localises to the cytoplasm. It catalyses the reaction tRNA(Cys) + L-cysteine + ATP = L-cysteinyl-tRNA(Cys) + AMP + diphosphate. This chain is Cysteine--tRNA ligase (cysS), found in Haemophilus influenzae (strain ATCC 51907 / DSM 11121 / KW20 / Rd).